The primary structure comprises 358 residues: Photosystem II protein D1 1 (358 aa).

3 consecutive transmembrane segments (helical) span residues 28–45 (YVGW…AATI), 117–132 (HFLI…QWEL), and 141–155 (WICV…AAFA). His-117 serves as a coordination point for chlorophyll a. Tyr-125 provides a ligand contact to pheophytin a. Positions 169 and 188 each coordinate [CaMn4O5] cluster. Residues 196-217 (FHMLGVAGVFGGSLFSAMHGSL) traverse the membrane as a helical segment. His-197 provides a ligand contact to chlorophyll a. A quinone-binding positions include His-214 and 263 to 264 (SF). Position 214 (His-214) interacts with Fe cation. Residue His-271 coordinates Fe cation. A helical transmembrane segment spans residues 273 to 287 (FLGAWPVIGIWFTSM). [CaMn4O5] cluster-binding residues include His-331, Glu-332, Asp-341, and Ala-343. Positions 344 to 358 (AAESTPVALQAPAIG) are excised as a propeptide.

The protein belongs to the reaction center PufL/M/PsbA/D family. As to quaternary structure, PSII is composed of 1 copy each of membrane proteins PsbA, PsbB, PsbC, PsbD, PsbE, PsbF, PsbH, PsbI, PsbJ, PsbK, PsbL, PsbM, PsbT, PsbX, PsbY, PsbZ, Psb30/Ycf12, peripheral proteins PsbO, CyanoQ (PsbQ), PsbU, PsbV and a large number of cofactors. It forms dimeric complexes. The D1/D2 heterodimer binds P680, chlorophylls that are the primary electron donor of PSII, and subsequent electron acceptors. It shares a non-heme iron and each subunit binds pheophytin, quinone, additional chlorophylls, carotenoids and lipids. D1 provides most of the ligands for the Mn4-Ca-O5 cluster of the oxygen-evolving complex (OEC). There is also a Cl(-1) ion associated with D1 and D2, which is required for oxygen evolution. The PSII complex binds additional chlorophylls, carotenoids and specific lipids. is required as a cofactor. Post-translationally, tyr-160 forms a radical intermediate that is referred to as redox-active TyrZ, YZ or Y-Z. In terms of processing, C-terminally processed by CtpA; processing is essential to allow assembly of the oxygen-evolving complex and thus photosynthetic growth.

Its subcellular location is the cellular thylakoid membrane. The catalysed reaction is 2 a plastoquinone + 4 hnu + 2 H2O = 2 a plastoquinol + O2. Photosystem II (PSII) is a light-driven water:plastoquinone oxidoreductase that uses light energy to abstract electrons from H(2)O, generating O(2) and a proton gradient subsequently used for ATP formation. It consists of a core antenna complex that captures photons, and an electron transfer chain that converts photonic excitation into a charge separation. The D1/D2 (PsbA/PsbD) reaction center heterodimer binds P680, the primary electron donor of PSII as well as several subsequent electron acceptors. The protein is Photosystem II protein D1 1 of Synechococcus sp. (strain CC9902).